We begin with the raw amino-acid sequence, 310 residues long: Pantothenate kinase (310 aa).

95 to 102 contacts ATP; sequence GSVAVGKS.

This sequence belongs to the prokaryotic pantothenate kinase family.

The protein localises to the cytoplasm. It catalyses the reaction (R)-pantothenate + ATP = (R)-4'-phosphopantothenate + ADP + H(+). It participates in cofactor biosynthesis; coenzyme A biosynthesis; CoA from (R)-pantothenate: step 1/5. In Rhodococcus opacus (strain B4), this protein is Pantothenate kinase.